Reading from the N-terminus, the 387-residue chain is Exodeoxyribonuclease 7 large subunit (387 aa).

Belongs to the XseA family. As to quaternary structure, heterooligomer composed of large and small subunits.

The protein localises to the cytoplasm. The enzyme catalyses Exonucleolytic cleavage in either 5'- to 3'- or 3'- to 5'-direction to yield nucleoside 5'-phosphates.. In terms of biological role, bidirectionally degrades single-stranded DNA into large acid-insoluble oligonucleotides, which are then degraded further into small acid-soluble oligonucleotides. In Campylobacter fetus subsp. fetus (strain 82-40), this protein is Exodeoxyribonuclease 7 large subunit.